The chain runs to 916 residues: Inter-alpha-trypsin inhibitor heavy chain H4 (916 aa).

Positions 1 to 27 (MKTPAPGRIHSIVLVLLSLAVLQTSKA) are cleaved as a signal peptide. The 122-residue stretch at 28–149 (QKVQNDIDIY…KVTFELVYEE (122 aa)) folds into the VIT domain. 2 N-linked (GlcNAc...) asparagine glycosylation sites follow: N82 and N208. Residues 275–458 (NVIFVIDKSG…LQLQDFYQEV (184 aa)) form the VWFA domain. N518 carries N-linked (GlcNAc...) asparagine glycosylation. Disordered regions lie at residues 597 to 616 (PEGQ…ESRG) and 678 to 701 (PLAP…TDFR). Residues 678-689 (PLAPASAPSPTS) are compositionally biased toward low complexity. S683 carries O-linked (GalNAc...) serine glycosylation. O-linked (GalNAc...) threonine glycans are attached at residues T705, T706, and T708. A disulfide bond links C733 and C911.

It belongs to the ITIH family. As to quaternary structure, interacts (via C-terminus) with DNAJC1 (via SANT 2 domain). Post-translationally, appears to be both N- and O-glycosylated.

The protein resides in the secreted. Type II acute-phase protein (APP) involved in inflammatory responses to trauma. May also play a role in liver development or regeneration. The sequence is that of Inter-alpha-trypsin inhibitor heavy chain H4 (ITIH4) from Bos taurus (Bovine).